The sequence spans 1345 residues: MENWQATEILPKIEAPLNIFNDIKTYTAEQLFDNLRIYFGDDPSRYNISFEALLGIYCNKIEWINFFTTPIAVAANVIRFNDVSRMTLGKVLFFIQLPRVATGNDVTAPKETTIMVAKHSEKHPINISFDLSAACLEHLENTFKNTVIDQILNINALHTVLRSLKNSADSLERGLIHAFMQTLLRKSPPQFIVLTMNENKVHNKQALSRVQRSNMFQSLKNRLLTSLFFLNRNNNSSYIYRILNDMMESVTESILNDTNNYTSKENIPLDGVLLGPIGSIQKLTNILSQYISTQVVSAPISYGHFIMGKENAVTAIAYRAIMADFTQFTVNAGTEQQDTNNKSEIFDKSRAYADLKLNTLKLGDKLVAFDHLHKVYKNTDVNDPLEQSLQLTFFFPLGIYIPTETGFSTMETRVKLNDTMENNLPTSVFFHNKDQVVQRIDFADILPSVCHPIVHDSTIVERLMKNEPLPTGHRFSQLCQLKITRENPTRILQTLYNLYESRQEVPKNTNVLKNELNVEDFYKPDNPTLPTERHPFFDLTYIQKNRATEVLCTPRIMIGNMPLPLAPISFHEARTNQMLEHAKTNSHNYDFTLKIVTESLTSGSYPELAYVIEILVHGNKHAFMILKQVISQCISYWFNMKHILLFCNSFEMIMLISNHMGDELIPGAAFAHYRNLVSLIRLVKRTISISNINEQLCGEPLVNFANALFDGRLFCPFVHTMPRNDTNAKITADDTPLTQNTVRVRNYEISDVQRMNLIDSSVVFTDNDRPSNENTILSKIFYFCVLPALSNNKACGAGVNVKELVLDLFYTEPFICPDDCFQENPISSDVLMSLIREAMGPGYTVANTSSIAKQLFKSLIYINENTKILEVEVSLDPAQRHGNSVHFQSLQHILYNGLCLISPITTLRRYYQPIPFHRFFSDPGICGTMNADIQVFLNTFPHYQRNDGGFPLPPPLALEFYNWQRTPFSVYSAFCPNSLLSIMTLAAMHSKLSPVAIAIQSKSKIHPGFAATLVRTDNFDVECLLYSSRAATSIILDDPTVTAEAKDIVTTYNFTQHLSFVDMGLGFSSTTATANLKRIKSDMGSKIQNLFSAFPIHAFTNTDINTWIRHHVGIEKPNPSEGEALNIITFGGINKNPPSILLHGQQAICEVILTPVTTNINFFKLPHNPRGRESCMMGTDPHNEEAARKALYDHTQTDSDTFAATTNPWASLPGSLGDILYNTAHREQLCYNPKTYSPNAQFFTESDILKTNKMMYKVINEYCMKSNSCLNSDSEIQYSCSEGTDSFVSRPCQFLQNALPLHCSSNQALLESRSKTGNTQISETHYCNYAIGETIPLQLIIESSI.

This sequence belongs to the herpesviridae major capsid protein family. In terms of assembly, homomultimer. Makes the hexons and eleven out of twelve pentons. Interacts with triplex proteins 1/TRX1 and 2/TRX2; adjacent capsomers are linked together in groups of three by triplexes, heterotrimeric complexes composed of one molecule of TRX1 and two molecules of TRX2. Interacts with scaffold protein; this interaction allows efficient MCP transport to the host nucleus. Interacts with capsid vertex component 2/CVC2. Interacts with the small capsomere-interacting protein/SCP.

It localises to the virion. It is found in the host nucleus. Its function is as follows. Self-assembles to form an icosahedral capsid with a T=16 symmetry, about 200 nm in diameter, and consisting of 150 hexons and 12 pentons (total of 162 capsomers). Hexons form the edges and faces of the capsid and are each composed of six MCP molecules. In contrast, one penton is found at each of the 12 vertices. Eleven of the pentons are MCP pentamers, while the last vertex is occupied by the portal complex. The capsid is surrounded by a layer of proteinaceous material designated the tegument which, in turn, is enclosed in an envelope of host cell-derived lipids containing virus-encoded glycoproteins. The chain is Major capsid protein from Homo sapiens (Human).